A 595-amino-acid chain; its full sequence is UvrABC system protein C (595 aa).

The GIY-YIG domain occupies 17 to 94; it reads IEPGCYLMKD…IKQYQPRYNI (78 aa). Positions 199–234 constitute a UVR domain; sequence KTILHNLEQKMQESSESLDFERAKEYRDLIQHIHNL.

Belongs to the UvrC family. In terms of assembly, interacts with UvrB in an incision complex.

It localises to the cytoplasm. Its function is as follows. The UvrABC repair system catalyzes the recognition and processing of DNA lesions. UvrC both incises the 5' and 3' sides of the lesion. The N-terminal half is responsible for the 3' incision and the C-terminal half is responsible for the 5' incision. The polypeptide is UvrABC system protein C (Staphylococcus saprophyticus subsp. saprophyticus (strain ATCC 15305 / DSM 20229 / NCIMB 8711 / NCTC 7292 / S-41)).